The primary structure comprises 86 residues: Small ribosomal subunit protein uS17 (86 aa).

The protein belongs to the universal ribosomal protein uS17 family. As to quaternary structure, part of the 30S ribosomal subunit.

In terms of biological role, one of the primary rRNA binding proteins, it binds specifically to the 5'-end of 16S ribosomal RNA. The chain is Small ribosomal subunit protein uS17 from Bifidobacterium adolescentis (strain ATCC 15703 / DSM 20083 / NCTC 11814 / E194a).